Consider the following 237-residue polypeptide: Thrombin-like enzyme agkihpin-2 (237 aa).

Residue Met1 is a propeptide. The region spanning 2–228 is the Peptidase S1 domain; the sequence is ILGDDECNIN…HLDWIENIIA (227 aa). A disulfide bridge links Cys27 with Cys43. His42 serves as the catalytic Charge relay system. A glycan (N-linked (GlcNAc...) asparagine) is linked at Asn80. Asp87 functions as the Charge relay system in the catalytic mechanism. Disulfide bonds link Cys119-Cys189, Cys151-Cys168, and Cys179-Cys204. Ser183 (charge relay system) is an active-site residue.

This sequence belongs to the peptidase S1 family. Snake venom subfamily. Expressed by the venom gland (at protein level). Expressed by the venom gland.

It localises to the secreted. With respect to regulation, the hydrolysis of TAMe (tosyl-arginine methyl ester) substrate is activated by Ca(2+), Fe(3+), Mg(2+) and Zn(2+), and inhibited by EDTA, PMSF and DTT. Thrombin-like enzyme that shows fibrinogenolytic activity against bovine fibrinogen alpha and beta chains, but not gamma chain. Hydrolyzes fibrin. Enhances ADP-induced human platelet aggregation. Has arginine esterase activity for TAMe (tosyl-arginine methyl ester) substrate. Reduces thrombin-induced thrombosis. Does not have hemorrhagic activity. Reduces the motility of human liver cancer HepG2 cells in a wound-healing assay. In Gloydius halys (Chinese water mocassin), this protein is Thrombin-like enzyme agkihpin-2.